We begin with the raw amino-acid sequence, 611 residues long: Probable methyltransferase PMT1 (611 aa).

At 1 to 11 the chain is on the cytoplasmic side; that stretch reads MRGRSEGGKKK. A helical; Signal-anchor for type II membrane protein transmembrane segment spans residues 12 to 32; it reads PVIVLLCVASVVLVFVYLFFG. The Lumenal segment spans residues 33-611; that stretch reads SSNHKAIEYG…LTSESLRDLE (579 aa). Asn345 carries N-linked (GlcNAc...) asparagine glycosylation.

The protein belongs to the methyltransferase superfamily.

It is found in the golgi apparatus membrane. The protein is Probable methyltransferase PMT1 of Arabidopsis thaliana (Mouse-ear cress).